We begin with the raw amino-acid sequence, 1761 residues long: Nonribosomal peptide synthetase 6 (1761 aa).

The segment at 63-468 is adenylation; it reads ERAALHPEKI…GRQDQQVKLR (406 aa). The Carrier 1 domain maps to 600-675; sequence EATTEMELKL…AMAEKAKPVS (76 aa). Ser-636 is modified (O-(pantetheine 4'-phosphoryl)serine). Positions 712 to 1135 are condensation 1; that stretch reads VEDVYPCTPL…AVLDPAEARD (424 aa). 2 Carrier domains span residues 1169-1242 and 1237-1313; these read SPNE…SNER and SASN…EEEM. O-(pantetheine 4'-phosphoryl)serine is present on residues Ser-1203 and Ser-1274. Residues 1354 to 1677 form a condensation 2 region; it reads IYPTRPLQQL…DKVQWFDTVV (324 aa).

Belongs to the NRP synthetase family.

The protein operates within siderophore biosynthesis. Functionally, NRPS involved in extracellular coprogen-type siderophores biosynthesis including coprogen, neocoprogen I and neocoprogen II. The role of extracellular siderophores in fungal virulence to plants is to supply iron to the fungus during plant infection, but not to act as phytotoxins, depriving their hosts of iron. In Cochliobolus miyabeanus (Brown spot disease fungus), this protein is Nonribosomal peptide synthetase 6.